Reading from the N-terminus, the 247-residue chain is MTILFLTMVISYFGCMKAAPMKEANARGQGSLAYPAVRTHGTLESVNGPKAGSRGLTSLADTFEHVIEDLLDEGQKVRPDEENSKDADLYTSRVMLSSQVPLEPPLLFLLEEYKNYLDAANMSMRVRRHSDPARRGELSVCDSISEWVTAADKKTAVDMSGGTVTVLEKVPVSKGQLKQYFYETKCNPMGYTKEGCRGIDKRHWNSQCRTTQSYVRALTMDSKKRIGWRFIRIDTSCVCTLTIKRGR.

Residues 1 to 18 form the signal peptide; the sequence is MTILFLTMVISYFGCMKA. Residues 19-128 constitute a propeptide that is removed on maturation; the sequence is APMKEANARG…AANMSMRVRR (110 aa). The N-linked (GlcNAc...) asparagine glycan is linked to asparagine 121. Intrachain disulfides connect cysteine 141–cysteine 208, cysteine 186–cysteine 237, and cysteine 196–cysteine 239.

The protein belongs to the NGF-beta family. In terms of assembly, monomers and homodimers. Binds to NTRK2/TRKB. Can form heterodimers with other neurotrophin family members, such as NTF3 and NTF4 (in vitro), but the physiological relevance of this is not clear. BDNF precursor form: interacts with the heterodimer formed by NGFR and SORCS2. Mature BDNF has much lower affinity for the heterodimer formed by NGFR and SORCS2. Post-translationally, N-glycosylated and glycosulfated, contrary to mature BDNF. Mature BDNF is produced by proteolytic removal of the propeptide, catalyzed by a FURIN family member. In addition, the precursor form is proteolytically cleaved within the propeptide, but this is not an obligatory intermediate for the production of mature BDNF. Can be converted into mature BDNF by plasmin (PLG).

The protein localises to the secreted. In terms of biological role, important signaling molecule that activates signaling cascades downstream of NTRK2. During development, promotes the survival and differentiation of selected neuronal populations of the peripheral and central nervous systems. Participates in axonal growth, pathfinding and in the modulation of dendritic growth and morphology. Major regulator of synaptic transmission and plasticity at adult synapses in many regions of the CNS. The versatility of BDNF is emphasized by its contribution to a range of adaptive neuronal responses including long-term potentiation (LTP), long-term depression (LTD), certain forms of short-term synaptic plasticity, as well as homeostatic regulation of intrinsic neuronal excitability. Its function is as follows. Important signaling molecule that activates signaling cascades downstream of NTRK2. Activates signaling cascades via the heterodimeric receptor formed by NGFR and SORCS2. Signaling via NGFR and SORCS2 plays a role in synaptic plasticity and long-term depression (LTD). Binding to NGFR and SORCS2 promotes neuronal apoptosis. Promotes neuronal growth cone collapse. This is Neurotrophic factor BDNF precursor form (BDNF) from Equus caballus (Horse).